We begin with the raw amino-acid sequence, 418 residues long: Nisin biosynthesis protein NisC (418 aa).

This sequence to B.subtilis SpaC and S.epidermidis EpiC.

Functionally, could be implicated in the processing or the export process of the nisin lantibiotic. This Lactococcus lactis subsp. lactis (Streptococcus lactis) protein is Nisin biosynthesis protein NisC (nisC).